Here is a 241-residue protein sequence, read N- to C-terminus: Methylthioribulose-1-phosphate dehydratase (241 aa).

Cys-96 is a substrate binding site. The Zn(2+) site is built by His-114 and His-116. Glu-138 (proton donor/acceptor) is an active-site residue. Residue His-194 coordinates Zn(2+).

This sequence belongs to the aldolase class II family. MtnB subfamily. As to quaternary structure, homotetramer. Interacts with APAF1. May interact with CASP1. Zn(2+) serves as cofactor. As to expression, expressed in skeletal muscle (at protein level).

Its subcellular location is the cytoplasm. It catalyses the reaction 5-(methylsulfanyl)-D-ribulose 1-phosphate = 5-methylsulfanyl-2,3-dioxopentyl phosphate + H2O. The protein operates within amino-acid biosynthesis; L-methionine biosynthesis via salvage pathway; L-methionine from S-methyl-5-thio-alpha-D-ribose 1-phosphate: step 2/6. In terms of biological role, catalyzes the dehydration of methylthioribulose-1-phosphate (MTRu-1-P) into 2,3-diketo-5-methylthiopentyl-1-phosphate (DK-MTP-1-P). Functions in the methionine salvage pathway, which plays a key role in cancer, apoptosis, microbial proliferation and inflammation. May inhibit the CASP1-related inflammatory response (pyroptosis), the CASP9-dependent apoptotic pathway and the cytochrome c-dependent and APAF1-mediated cell death. The protein is Methylthioribulose-1-phosphate dehydratase of Mus musculus (Mouse).